A 234-amino-acid chain; its full sequence is Cyclo(L-leucyl-L-leucyl) synthase (234 aa).

S28 acts as the Nucleophile in catalysis. Residues 171 to 175 (YVLAE), Y195, and 200 to 201 (EL) each bind substrate.

It belongs to the CDPS family.

The catalysed reaction is 2 L-leucyl-tRNA(Leu) = cyclo(L-leucyl-L-leucyl) + 2 tRNA(Leu) + 2 H(+). It uses activated amino acids in the form of aminoacyl-tRNAs (aa-tRNAs) as substrates to catalyze the ATP-independent formation of cyclodipeptides which are intermediates in diketopiperazine (DKP) biosynthetic pathways. Catalyzes the formation of cyclo(L-Leu-L-Leu) (cLL) from L-leucyl-tRNA(Leu). Can incorporate various nonpolar residues, such as L-phenylalanine, L-leucine and L-methionine, into cyclodipeptides. This Staphylococcus haemolyticus (strain JCSC1435) protein is Cyclo(L-leucyl-L-leucyl) synthase.